A 534-amino-acid polypeptide reads, in one-letter code: NAD(P)H-quinone oxidoreductase chain 4 (534 aa).

Helical transmembrane passes span 12–32 (FPWL…IPFF), 44–64 (FALS…INGF), 94–114 (ISMP…LAAW), 120–140 (PKLF…VFAV), 144–164 (LLFF…LAIW), 176–196 (FIIY…AMGF), 220–240 (ILCY…VPLH), 251–271 (TAPV…YALL), 285–305 (FAPL…LTSF), 314–334 (IAYS…SFSS), 340–360 (AMLQ…LVGA), 384–404 (FALW…SGFV), 425–445 (VIMA…LLSM), and 472–492 (VYII…PRLV).

This sequence belongs to the complex I subunit 4 family.

The protein localises to the cellular thylakoid membrane. The catalysed reaction is a plastoquinone + NADH + (n+1) H(+)(in) = a plastoquinol + NAD(+) + n H(+)(out). The enzyme catalyses a plastoquinone + NADPH + (n+1) H(+)(in) = a plastoquinol + NADP(+) + n H(+)(out). Its function is as follows. NDH-1 shuttles electrons from NAD(P)H, via FMN and iron-sulfur (Fe-S) centers, to quinones in the respiratory chain. The immediate electron acceptor for the enzyme in this species is believed to be plastoquinone. Couples the redox reaction to proton translocation (for every two electrons transferred, four hydrogen ions are translocated across the cytoplasmic membrane), and thus conserves the redox energy in a proton gradient. The polypeptide is NAD(P)H-quinone oxidoreductase chain 4 (Prochlorococcus marinus (strain MIT 9312)).